We begin with the raw amino-acid sequence, 65 residues long: Movement protein TGBp3 (65 aa).

At 1–3 the chain is on the lumenal side; that stretch reads MQA. The chain crosses the membrane as a helical span at residues 4–24; it reads SGLILVALFSAVVSYLALLHL. Over 25 to 65 the chain is Cytoplasmic; that stretch reads SSSSSSCVVVVTGESFRISGCDFTEEFIGFAKTLRVANSQP.

The protein belongs to the Tymovirales TGBp3 protein family.

The protein resides in the host endoplasmic reticulum membrane. In terms of biological role, plays a role in viral cell-to-cell propagation, by facilitating genome transport to neighboring plant cells through plasmosdesmata. May induce the formation of granular vesicles derived from the Endoplasmic reticulum, which align on actin filaments. The protein is Movement protein TGBp3 of Carnation latent virus (CLV).